Reading from the N-terminus, the 124-residue chain is Transcription initiation factor IIA subunit 2 (124 aa).

It belongs to the TFIIA subunit 2 family. As to quaternary structure, TFIIA is a heterodimer composed of the large TOA1 and the small TOA2 subunits.

It is found in the nucleus. Its function is as follows. TFIIA is a component of the transcription machinery of RNA polymerase II and plays an important role in transcriptional activation. TFIIA in a complex with tbp mediates transcriptional activity. The polypeptide is Transcription initiation factor IIA subunit 2 (TOA2) (Cryptococcus neoformans var. neoformans serotype D (strain JEC21 / ATCC MYA-565) (Filobasidiella neoformans)).